Here is a 246-residue protein sequence, read N- to C-terminus: Probable S-methyl-5'-thioinosine phosphorylase (246 aa).

Residues Thr10 and 52–53 contribute to the phosphate site; that span reads RH. Position 185 (Met185) interacts with substrate. Thr186 serves as a coordination point for phosphate. Substrate is bound at residue 209–211; it reads NPA.

The protein belongs to the PNP/MTAP phosphorylase family. MTAP subfamily. Homotrimer.

The enzyme catalyses S-methyl-5'-thioinosine + phosphate = 5-(methylsulfanyl)-alpha-D-ribose 1-phosphate + hypoxanthine. It functions in the pathway purine metabolism; purine nucleoside salvage. Functionally, catalyzes the reversible phosphorylation of S-methyl-5'-thioinosine (MTI) to hypoxanthine and 5-methylthioribose-1-phosphate. Involved in the breakdown of S-methyl-5'-thioadenosine (MTA), a major by-product of polyamine biosynthesis. Catabolism of (MTA) occurs via deamination to MTI and phosphorolysis to hypoxanthine. The sequence is that of Probable S-methyl-5'-thioinosine phosphorylase from Pseudomonas syringae pv. tomato (strain ATCC BAA-871 / DC3000).